The sequence spans 430 residues: Adenylosuccinate synthetase (430 aa).

Residues 13–19 and 41–43 each bind GTP; these read GDEGKGK and GHT. Catalysis depends on aspartate 14, which acts as the Proton acceptor. Residues aspartate 14 and glycine 41 each contribute to the Mg(2+) site. Residues 14 to 17, 39 to 42, threonine 130, arginine 144, glutamine 225, threonine 240, and arginine 304 each bind IMP; these read DEGK and NAGH. Histidine 42 acts as the Proton donor in catalysis. 300 to 306 lines the substrate pocket; the sequence is STTGRAR. Residues arginine 306, 332–334, and 414–416 each bind GTP; these read KLD and STG.

It belongs to the adenylosuccinate synthetase family. In terms of assembly, homodimer. Mg(2+) is required as a cofactor.

It localises to the cytoplasm. The enzyme catalyses IMP + L-aspartate + GTP = N(6)-(1,2-dicarboxyethyl)-AMP + GDP + phosphate + 2 H(+). It participates in purine metabolism; AMP biosynthesis via de novo pathway; AMP from IMP: step 1/2. Its function is as follows. Plays an important role in the de novo pathway of purine nucleotide biosynthesis. Catalyzes the first committed step in the biosynthesis of AMP from IMP. The sequence is that of Adenylosuccinate synthetase from Azotobacter vinelandii (strain DJ / ATCC BAA-1303).